The chain runs to 957 residues: Outer kinetochore KNL1 complex subunit knl-1 (957 aa).

Repeat 1 spans residues 87 to 90; sequence MDIT. Residues 87-393 are 8 X 4 AA repeats of M-[D/E]-[I/L/M]-[S/T]; it reads MDITGLNSTP…NFDDVAMDIT (307 aa). The segment at 89 to 111 is disordered; sequence ITGLNSTPVTPKTQTPFNGSMDM. Over residues 91–106 the composition is skewed to polar residues; sequence GLNSTPVTPKTQTPFN. Tandem repeats lie at residues 109–112, 206–209, 251–254, 282–285, 326–329, 367–370, and 390–393. The tract at residues 476 to 504 is disordered; that stretch reads SLQQSSMRMSTTITEDVTASKNPESSTIS. Residues 830–950 are a coiled coil; it reads KFAKESNVEI…RKKKEEMVER (121 aa).

Component of the KNL1 complex composed of knl-1 and kbp-5. Part of the ten-subunit outer kinetochore KMN network that includes the KNL1, MIS12 and NDC80 complexes. Interacts with the protein phosphatase 1 (PP1) catalytic subunit gsp-1; the interaction is direct. Interacts with the protein phosphatase 1 (PP1) catalytic subunit gsp-2; the interaction is direct. Interacts with the MIS12 complex subunits kbp-1, kbp-2 and mis-12. Interacts with the NDC80 complex components ndc-80 and him-10. Interacts with knl-3. Interacts with kbp-3. Interacts with kbp-4. Interacts with kbp-5.

The protein localises to the cytoplasm. It localises to the cell cortex. Its subcellular location is the chromosome. It is found in the centromere. The protein resides in the kinetochore. Functionally, acts as a component of the outer kinetochore KNL1 complex that serves as a docking point for spindle assembly checkpoint components and mediates microtubule-kinetochore interactions. Kinetochores, consisting of a centromere-associated inner segment and a microtubule-contacting outer segment, play a crucial role in chromosome segregation by mediating the physical connection between centromeric DNA and spindle microtubules. The outer kinetochore is made up of the ten-subunit KMN network, comprising the MIS12, NDC80 and KNL1 complexes, and auxiliary microtubule-associated components; together they connect the outer kinetochore with the inner kinetochore, bind microtubules, and mediate interactions with mitotic checkpoint proteins that delay anaphase until chromosomes are bioriented on the spindle. Binds the protein phosphatase 1 catalytic subunits gsp-1 and gsp-2, which has a role in delaying formation of load-bearing kinetochore-microtubule attachments. Required for the recruitment of spindle-assembly checkpoint components bub-1 and mdf-1/2 to unattached kinetochores. Binds microtubules which plays a role in silencing of the spindle assembly checkpoint, but not the formation of load-bearing microtubule-kinetochore attachments. Has a role in the correct localization of the spindly-like protein spdl-1 and the RZZ complex that is composed of rod-1, czw-1 and zwl-1 to kinetochores. The sequence is that of Outer kinetochore KNL1 complex subunit knl-1 from Caenorhabditis briggsae.